The following is a 187-amino-acid chain: ATP synthase subunit b (187 aa).

Residues 36 to 53 (PYQWVSVAMLVLIAIMLW) traverse the membrane as a helical segment.

The protein belongs to the ATPase B chain family. As to quaternary structure, F-type ATPases have 2 components, F(1) - the catalytic core - and F(0) - the membrane proton channel. F(1) has five subunits: alpha(3), beta(3), gamma(1), delta(1), epsilon(1). F(0) has four main subunits: a(1), b(2) and c(10-14). The alpha and beta chains form an alternating ring which encloses part of the gamma chain. F(1) is attached to F(0) by a central stalk formed by the gamma and epsilon chains, while a peripheral stalk is formed by the delta and b chains.

It is found in the cell inner membrane. F(1)F(0) ATP synthase produces ATP from ADP in the presence of a proton or sodium gradient. F-type ATPases consist of two structural domains, F(1) containing the extramembraneous catalytic core and F(0) containing the membrane proton channel, linked together by a central stalk and a peripheral stalk. During catalysis, ATP synthesis in the catalytic domain of F(1) is coupled via a rotary mechanism of the central stalk subunits to proton translocation. Its function is as follows. Component of the F(0) channel, it forms part of the peripheral stalk, linking F(1) to F(0). The polypeptide is ATP synthase subunit b (Erythrobacter litoralis (strain HTCC2594)).